The sequence spans 240 residues: MVVSHLNRTVTSLNELFEHHAHFAGLSDISISEDIPVEGDISVPVGSQNADNDFSTLDEPVKDTILRDLRAVGQKFVHVMYPKKSSALLRDWDLWGPLLLCVTLALMLQGGSADSEEDGRPQFAEVFVIIWFGSVIITLNSKLLGGTISFFQSLCVLGYCILPLTVAMIVCRIVLLGGSGVVSFAVRLIVVTASFSWSTFASTAFLADSQPTNRKALVVYPVFLFYFVIGWMILTFSPSH.

Residues 1 to 91 are Cytoplasmic-facing; sequence MVVSHLNRTV…PKKSSALLRD (91 aa). A helical transmembrane segment spans residues 92–112; that stretch reads WDLWGPLLLCVTLALMLQGGS. The Lumenal segment spans residues 113–125; that stretch reads ADSEEDGRPQFAE. The chain crosses the membrane as a helical span at residues 126–146; that stretch reads VFVIIWFGSVIITLNSKLLGG. Residues 147–149 lie on the Cytoplasmic side of the membrane; that stretch reads TIS. Residues 150 to 170 traverse the membrane as a helical segment; the sequence is FFQSLCVLGYCILPLTVAMIV. At 171–172 the chain is on the lumenal side; that stretch reads CR. Residues 173-193 traverse the membrane as a helical segment; sequence IVLLGGSGVVSFAVRLIVVTA. The Cytoplasmic segment spans residues 194–215; the sequence is SFSWSTFASTAFLADSQPTNRK. A helical transmembrane segment spans residues 216–236; the sequence is ALVVYPVFLFYFVIGWMILTF. Residues 237–240 are Lumenal-facing; sequence SPSH.

It belongs to the YIP1 family.

It localises to the golgi apparatus membrane. This chain is Protein YIPF6 (yipf6), found in Danio rerio (Zebrafish).